A 152-amino-acid chain; its full sequence is Transcriptional repressor NrdR (152 aa).

A zinc finger spans residues 3-34 (CPACQHNGTRVLDSRPVDEGRSIRRRRECESC). Positions 49 to 139 (LIVVKKEGIR…VYRQFKDINV (91 aa)) constitute an ATP-cone domain.

It belongs to the NrdR family. Zn(2+) serves as cofactor.

Functionally, negatively regulates transcription of bacterial ribonucleotide reductase nrd genes and operons by binding to NrdR-boxes. This Bacillus licheniformis (strain ATCC 14580 / DSM 13 / JCM 2505 / CCUG 7422 / NBRC 12200 / NCIMB 9375 / NCTC 10341 / NRRL NRS-1264 / Gibson 46) protein is Transcriptional repressor NrdR.